A 215-amino-acid polypeptide reads, in one-letter code: Nascent polypeptide-associated complex subunit alpha (215 aa).

The interval 1-81 (MPGEATETVP…SEKKARKAMS (81 aa)) is disordered. Residues 9 to 28 (VPATEQELPQPQAETGSGTE) are compositionally biased toward polar residues. The segment covering 29-40 (SDSDESVPELEG) has biased composition (acidic residues). Residue Ser-43 is modified to Phosphoserine; by ILK1. A compositionally biased stretch (low complexity) spans 44–57 (TQATTQQAQLAAAA). Positions 69–80 (QSRSEKKARKAM) are required for DNA-binding. In terms of domain architecture, NAC-A/B spans 70–135 (SRSEKKARKA…AKIEDLSQQA (66 aa)). Positions 93-108 (RVTIRKSKNILFVITK) are RNA/DNA-binding. At Ser-132 the chain carries Phosphoserine. Position 142 is an N6-acetyllysine; alternate (Lys-142). Lys-142 participates in a covalent cross-link: Glycyl lysine isopeptide (Lys-Gly) (interchain with G-Cter in SUMO2); alternate. Thr-159 carries the post-translational modification Phosphothreonine; by GSK3-beta. Thr-161 carries the post-translational modification Phosphothreonine. Phosphoserine occurs at positions 166, 186, 191, and 203. Residues 176–213 (VEVKDIEWVMSQANVSRAKAVRALKNNSNNIVNAIMEL) enclose the UBA domain.

The protein belongs to the NAC-alpha family. As to quaternary structure, part of the nascent polypeptide-associated complex (NAC), which is a heterodimer of NACA and BTF3 (via NAC-A/B domains). NAC associates with ribosomes through the BTF3/NACB subunit and contacts the ribosomal protein L23, which is positioned near the exiting site. Both subunits can contact nascent polypeptide chains. NACA may also form homodimers, and only this form binds DNA. Interacts with TBP and JUN. In terms of processing, phosphorylation of Ser-43 by ILK during cell adhesion may promote nuclear localization. Phosphorylation of Thr-159 by GSK3B may promote proteasome mediated degradation.

Its subcellular location is the cytoplasm. The protein localises to the nucleus. Its function is as follows. Prevents inappropriate targeting of non-secretory polypeptides to the endoplasmic reticulum (ER). Binds to nascent polypeptide chains as they emerge from the ribosome and blocks their interaction with the signal recognition particle (SRP), which normally targets nascent secretory peptides to the ER. Also reduces the inherent affinity of ribosomes for protein translocation sites in the ER membrane (M sites). May act as a specific coactivator for JUN, binding to DNA and stabilizing the interaction of JUN homodimers with target gene promoters. In Chinchilla lanigera (Long-tailed chinchilla), this protein is Nascent polypeptide-associated complex subunit alpha.